Reading from the N-terminus, the 72-residue chain is Translation initiation factor IF-1 (72 aa).

An S1-like domain is found at 1 to 72 (MSKEEAIEVE…SRGRITYRAK (72 aa)).

It belongs to the IF-1 family. In terms of assembly, component of the 30S ribosomal translation pre-initiation complex which assembles on the 30S ribosome in the order IF-2 and IF-3, IF-1 and N-formylmethionyl-tRNA(fMet); mRNA recruitment can occur at any time during PIC assembly.

The protein resides in the cytoplasm. Its function is as follows. One of the essential components for the initiation of protein synthesis. Stabilizes the binding of IF-2 and IF-3 on the 30S subunit to which N-formylmethionyl-tRNA(fMet) subsequently binds. Helps modulate mRNA selection, yielding the 30S pre-initiation complex (PIC). Upon addition of the 50S ribosomal subunit IF-1, IF-2 and IF-3 are released leaving the mature 70S translation initiation complex. The chain is Translation initiation factor IF-1 from Geobacter metallireducens (strain ATCC 53774 / DSM 7210 / GS-15).